The primary structure comprises 159 residues: Intron-encoded endonuclease ai4 (159 aa).

The protein belongs to the LAGLIDADG endonuclease family.

The protein localises to the mitochondrion. Functionally, mitochondrial DNA endonuclease involved in intron homing. The protein is Intron-encoded endonuclease ai4 (ai4) of Dictyostelium discoideum (Social amoeba).